Consider the following 57-residue polypeptide: Large ribosomal subunit protein bL32B (57 aa).

This sequence belongs to the bacterial ribosomal protein bL32 family.

This is Large ribosomal subunit protein bL32B (rpmF2) from Listeria innocua serovar 6a (strain ATCC BAA-680 / CLIP 11262).